Here is a 239-residue protein sequence, read N- to C-terminus: Large ribosomal subunit protein mL67 (239 aa).

The protein belongs to the mitochondrion-specific ribosomal protein mL67 family. Component of the mitochondrial large ribosomal subunit (mt-LSU).

It localises to the nucleus. The protein localises to the mitochondrion. Its function is as follows. Component of the mitochondrial ribosome (mitoribosome), a dedicated translation machinery responsible for the synthesis of mitochondrial genome-encoded proteins, including at least some of the essential transmembrane subunits of the mitochondrial respiratory chain. The mitoribosomes are attached to the mitochondrial inner membrane and translation products are cotranslationally integrated into the membrane. mL67/MHR1 also has extraribosomal functions, being involved in regulation of mitochondrial DNA recombination, maintenance and repair, and generation of homoplasmic cells. mL67/MHR1 also acts as transcription factor involved in regulation of RNA polymerase II-dependent transcription. The sequence is that of Large ribosomal subunit protein mL67 (MHR1) from Candida albicans (strain SC5314 / ATCC MYA-2876) (Yeast).